The primary structure comprises 401 residues: Insertion element ISM1 uncharacterized 48.3 kDa protein (401 aa).

In terms of biological role, this polypeptide is involved in transposition, and should therefore bind to nucleic acids. In Methanobrevibacter smithii, this protein is Insertion element ISM1 uncharacterized 48.3 kDa protein.